We begin with the raw amino-acid sequence, 543 residues long: Chaperonin GroEL (543 aa).

Residues 31 to 34 (TMGP), 88 to 92 (DGTTT), G415, 479 to 481 (DAL), and D495 each bind ATP.

This sequence belongs to the chaperonin (HSP60) family. In terms of assembly, forms a cylinder of 14 subunits composed of two heptameric rings stacked back-to-back. Interacts with the co-chaperonin GroES.

Its subcellular location is the cytoplasm. It catalyses the reaction ATP + H2O + a folded polypeptide = ADP + phosphate + an unfolded polypeptide.. Functionally, together with its co-chaperonin GroES, plays an essential role in assisting protein folding. The GroEL-GroES system forms a nano-cage that allows encapsulation of the non-native substrate proteins and provides a physical environment optimized to promote and accelerate protein folding. In Clostridium tetani (strain Massachusetts / E88), this protein is Chaperonin GroEL.